Consider the following 261-residue polypeptide: Fructoselysine 6-kinase (261 aa).

The protein belongs to the carbohydrate kinase PfkB family. Monomer.

The enzyme catalyses N(6)-(D-fructosyl)-L-lysine + ATP = N(6)-(6-phospho-D-fructosyl)-L-lysine + ADP + H(+). Its pathway is carbohydrate metabolism; fructoselysine degradation; D-glucose 6-phosphate and lysine from fructoselysine: step 1/2. Functionally, catalyzes the ATP-dependent phosphorylation of fructoselysine to fructoselysine 6-phosphate. Functions in a fructoselysine degradation pathway that allows E.coli to grow on fructoselysine or psicoselysine. To a much lesser extenst, is also able to phosphorylate psicoselysine. The chain is Fructoselysine 6-kinase from Escherichia coli (strain K12).